Consider the following 479-residue polypeptide: Monodehydroascorbate reductase 1, peroxisomal (479 aa).

Residues 1–3 are Cytoplasmic-facing; it reads MGR. The chain crosses the membrane as a helical span at residues 4–24; the sequence is AFEYVILGGGVAAGYAALEFV. FAD contacts are provided by residues 12-15, Glu41, Arg48, Lys53, and 147-148; these read GGVA and RN. Topologically, residues 25-445 are peroxisomal; that stretch reads RRNGGASSQE…QATGGGGKPT (421 aa). NAD(+)-binding positions include 172 to 178, Arg202, and Gly260; that span reads GGYIGME. NADP(+) is bound by residues 174–178, Arg202, and Gly260; that span reads YIGME. Asp297 provides a ligand contact to FAD. An NAD(+)-binding site is contributed by 314-315; sequence EH. Position 314–315 (314–315) interacts with NADP(+); sequence EH. Val316 serves as a coordination point for FAD. Arg320 is an L-ascorbate binding site. Residue Tyr347 coordinates FAD. An NAD(+)-binding site is contributed by Tyr347. Tyr347 lines the NADP(+) pocket. Arg349 lines the L-ascorbate pocket. Residues 446–466 traverse the membrane as a helical segment; that stretch reads CAWHATVGVAAAVSIAAFACW. The Cytoplasmic portion of the chain corresponds to 467–479; that stretch reads YGWQAPYVLKRDF.

This sequence belongs to the FAD-dependent oxidoreductase family. FAD serves as cofactor.

The protein resides in the peroxisome membrane. The enzyme catalyses 2 monodehydro-L-ascorbate radical + NADH + H(+) = 2 L-ascorbate + NAD(+). Functionally, catalyzes the conversion of monodehydroascorbate to ascorbate, oxidizing NADH in the process. Ascorbate is a major antioxidant against reactive oxygen species (ROS) and nitric oxide (NO). The chain is Monodehydroascorbate reductase 1, peroxisomal from Oryza sativa subsp. japonica (Rice).